The following is a 905-amino-acid chain: Clumping factor B (905 aa).

The signal sequence occupies residues 1 to 44 (MKKRIDYLSNKQNKYSIRRFTVGTTSVIVGATILFGIGNHQAQA). The YSIRK-G/S signaling motif signature appears at 15-26 (YSIRRFTVGTTS). Polar residues-rich tracts occupy residues 44–61 (ASEQ…NASA) and 68–101 (MIET…KPMS). The disordered stretch occupies residues 44 to 191 (ASEQSNDTTQ…AQGTSKPSVR (148 aa)). A ligand binding A region region spans residues 45 to 542 (SEQSNDTTQS…GSADGDSAVN (498 aa)). The segment covering 102 to 119 (TQTSNTTTTEPASTNETP) has biased composition (low complexity). Positions 134-189 (QDQTVPQEANSQVDNKTTNDANSIATNSELKNPQTLDLPQSSPQTISNAQGTSKPS) are enriched in polar residues. The MIDAS-like motif signature appears at 272-276 (DYSNS). The tract at residues 530 to 877 (YGGGSADGDS…ETGDKSENTN (348 aa)) is disordered. The segment covering 545 to 555 (DPTPGPPVDPE) has biased composition (pro residues). Positions 556–829 (PSPDPEPEPS…SDSDSDSDSD (274 aa)) are enriched in acidic residues. The segment covering 833–844 (RVTPPNNEQKAP) has biased composition (polar residues). Positions 861–874 (HKTDALPETGDKSE) are enriched in basic and acidic residues. The LPXTG sorting signal signature appears at 866–870 (LPETG). Position 869 is a pentaglycyl murein peptidoglycan amidated threonine (Thr869). Positions 870 to 905 (GDKSENTNATLFGAMMALLGSLLLFRKRKQDHKEKA) are cleaved as a propeptide — removed by sortase.

It belongs to the serine-aspartate repeat-containing protein (SDr) family. Post-translationally, proteolytically cleaved by aureolysin (aur). This cleavage leads to the inactivation of ClfB.

The protein resides in the secreted. It localises to the cell wall. In terms of biological role, cell surface-associated protein implicated in virulence by promoting bacterial attachment to both alpha- and beta-chains of human fibrinogen and inducing the formation of bacterial clumps. This chain is Clumping factor B (clfB), found in Staphylococcus aureus (strain MSSA476).